Reading from the N-terminus, the 137-residue chain is Small ribosomal subunit protein uS12 (137 aa).

Disordered stretches follow at residues 1-22 (MPTI…SKSP) and 35-57 (ATNN…TPKK). Positions 9–18 (RKPRKSKVSK) are enriched in basic residues. Asp102 is subject to 3-methylthioaspartic acid.

The protein belongs to the universal ribosomal protein uS12 family. Part of the 30S ribosomal subunit. Contacts proteins S8 and S17. May interact with IF1 in the 30S initiation complex.

Its function is as follows. With S4 and S5 plays an important role in translational accuracy. Functionally, interacts with and stabilizes bases of the 16S rRNA that are involved in tRNA selection in the A site and with the mRNA backbone. Located at the interface of the 30S and 50S subunits, it traverses the body of the 30S subunit contacting proteins on the other side and probably holding the rRNA structure together. The combined cluster of proteins S8, S12 and S17 appears to hold together the shoulder and platform of the 30S subunit. This chain is Small ribosomal subunit protein uS12, found in Leuconostoc mesenteroides subsp. mesenteroides (strain ATCC 8293 / DSM 20343 / BCRC 11652 / CCM 1803 / JCM 6124 / NCDO 523 / NBRC 100496 / NCIMB 8023 / NCTC 12954 / NRRL B-1118 / 37Y).